The chain runs to 343 residues: Thromboxane A2 receptor (343 aa).

Residues 1–29 (MWPNASSLGPCFRPMNITLEERRLIASPW) are Extracellular-facing. Asn-4 and Asn-16 each carry an N-linked (GlcNAc...) asparagine glycan. Residues 30–52 (FAASFCLVGLASNLLALSVLMGA) traverse the membrane as a helical segment. Over 53–66 (RQGSSQSRSSFLTF) the chain is Cytoplasmic. The chain crosses the membrane as a helical span at residues 67-87 (LCGLVLTDFMGLLVTGAIVVT). At 88-106 (QHFVLFEWQAVDPGCSLCH) the chain is on the extracellular side. A disulfide bridge connects residues Cys-105 and Cys-183. A helical transmembrane segment spans residues 107-128 (FMGVIMVFFGLCPLLLGAAMAS). Over 129–149 (ERFLGITRPFSRPATASQRRA) the chain is Cytoplasmic. The chain crosses the membrane as a helical span at residues 150–172 (WTTVGLVWASALALGLLPLLGVG). Topologically, residues 173–193 (HYTVQYPGSWCFLTLGTDPGD) are extracellular. The helical transmembrane segment at 194 to 219 (VAFGLLFALLGSISVGMSFLLNTISV) threads the bilayer. Over 220 to 246 (ATLCHVYHGQATAQQRPRDCEVEMMVQ) the chain is Cytoplasmic. The chain crosses the membrane as a helical span at residues 247 to 270 (LMGIMVVASICWMPLLVFIAQTVL). At 271–289 (QSPPAMSPTGQLSRLTERQ) the chain is on the extracellular side. A helical membrane pass occupies residues 290 to 311 (LLIYLRVATWNQILDPWVYILF). Residues 312–343 (RRAVIQRFYPRLSTRSRSLSLQPQLTRRSTIH) are Cytoplasmic-facing. Phosphoserine is present on residues Ser-329 and Ser-331.

It belongs to the G-protein coupled receptor 1 family. Interacts with RPGRIP1L. Interacts with RACK1; the interaction regulates TBXA2R cell surface expression.

It is found in the cell membrane. Receptor for thromboxane A2 (TXA2), a potent stimulator of platelet aggregation. The activity of this receptor is mediated by a G-protein that activates a phosphatidylinositol-calcium second messenger system. In the kidney, the binding of TXA2 to glomerular TP receptors causes intense vasoconstriction. Activates phospholipase C and adenylyl cyclase. This chain is Thromboxane A2 receptor (TBXA2R), found in Bos taurus (Bovine).